Consider the following 178-residue polypeptide: PRA1 family protein 2 (178 aa).

The Cytoplasmic portion of the chain corresponds to 1–41 (MSEVRLPPLRALDDFVLGSARLVAPDPCDPQRWCHRVINNL). The chain crosses the membrane as a helical span at residues 42–62 (LYYQTNYLICFGLGLALAGYV). Topologically, residues 63 to 64 (RP) are extracellular. Residues 65-85 (LHTLLSALVVAVALGMLVCAA) traverse the membrane as a helical segment. At 86–96 (ENRAAVRRCRR) the chain is on the cytoplasmic side. Residues 97-119 (SHPAACLAAVLAVGFLVLWAAGG) traverse the membrane as a helical segment. Residues 120-122 (AGT) lie on the Extracellular side of the membrane. The helical transmembrane segment at 123 to 140 (FLLSIAGPVLLILVHASL) threads the bilayer. Topologically, residues 141 to 178 (RLRNLKNKIENKIESIGLKRTPMGLLLEALGQEQEAGS) are cytoplasmic.

This sequence belongs to the PRA1 family. In terms of assembly, interacts with CCR5 and GDE1.

The protein localises to the endosome membrane. May be involved in ER/Golgi transport and vesicular traffic. Plays a proapoptotic role in cerulenin-induced neuroblastoma apoptosis. The protein is PRA1 family protein 2 (PRAF2) of Bos taurus (Bovine).